The primary structure comprises 386 residues: ADP,ATP carrier protein 1, mitochondrial (386 aa).

The N-terminal 76 residues, 1-76, are a transit peptide targeting the mitochondrion; it reads MDQVQHPSVM…PSTASAICVQ (76 aa). Solcar repeat units lie at residues 84-177, 189-281, and 289-375; these read SSFA…FKRL, KWFA…LKPV, and DSFF…LQLI. The next 5 membrane-spanning stretches (helical) occupy residues 86-113, 154-178, 187-207, 257-278, and 292-312; these read FAIDFLMGGVSAAVSKTAAAPIERVKLL, TANVIRYFPTQALNFAFKDYFKRLF, YWKWFAGNLASGGAAGASSLL, FNISCVGIIVYRGLYFGMYDSL, and FASFVLGWLITNGAALASYPI. ADP-binding residues include Arg-159 and Lys-171. Residue Arg-316 participates in ADP binding. The segment at 316-321 is important for transport activity; the sequence is RRRMMM. Residues 316–321 carry the Nucleotide carrier signature motif motif; sequence RRRMMM. The chain crosses the membrane as a helical span at residues 352–372; that stretch reads AGSNILRAIAGAGVLAGYDKL.

The protein belongs to the mitochondrial carrier (TC 2.A.29) family. As to quaternary structure, monomer.

Its subcellular location is the mitochondrion inner membrane. It carries out the reaction ADP(in) + ATP(out) = ADP(out) + ATP(in). Its activity is regulated as follows. The matrix-open state (m-state) is inhibited by the membrane-permeable bongkrekic acid (BKA). The cytoplasmic-open state (c-state) is inhibited by the membrane-impermeable toxic inhibitor carboxyatractyloside (CATR). Functionally, ADP:ATP antiporter that mediates import of ADP into the mitochondrial matrix for ATP synthesis, and export of ATP out to fuel the cell. Cycles between the cytoplasmic-open state (c-state) and the matrix-open state (m-state): operates by the alternating access mechanism with a single substrate-binding site intermittently exposed to either the cytosolic (c-state) or matrix (m-state) side of the inner mitochondrial membrane. This chain is ADP,ATP carrier protein 1, mitochondrial (ANT1), found in Gossypium hirsutum (Upland cotton).